We begin with the raw amino-acid sequence, 396 residues long: MTLLNPYFGEFGGQYVPQILMPALKQLEEAFVSAQRDPEFQAEFIDLLKNYAGRPTALTLCRNLTAGTKTKLYLKREDLLHGGAHKTNQVLGQALLAKRMGKTEIIAETGAGQHGVASALACALLGLKCRIYMGAKDIERQSPNVFRMRLMGAEVIPVHSGSSTLKDACNEALRDWSGSYETAHYMLGTAAGPHPYPTIVREFQRMIGEETKAQMLEREGRLPDAVLACVGGGSNAIGMFADFIDDTSVGLIGVEPAGLGIETGQHGAPLKHGHVGIYFGMKAPMMQTSEGQIEESYSISAGLDFPSVGPQHAYLNSIGRAEYVSITDDEALDAFKALSRSEGIIPALESSHALAHALKMIRETPQKEQILVVNLSGRGDKDIFTVHDILKARGEI.

Residue K86 is modified to N6-(pyridoxal phosphate)lysine.

Belongs to the TrpB family. Tetramer of two alpha and two beta chains. Pyridoxal 5'-phosphate is required as a cofactor.

The catalysed reaction is (1S,2R)-1-C-(indol-3-yl)glycerol 3-phosphate + L-serine = D-glyceraldehyde 3-phosphate + L-tryptophan + H2O. Its pathway is amino-acid biosynthesis; L-tryptophan biosynthesis; L-tryptophan from chorismate: step 5/5. In terms of biological role, the beta subunit is responsible for the synthesis of L-tryptophan from indole and L-serine. This Serratia proteamaculans (strain 568) protein is Tryptophan synthase beta chain.